The primary structure comprises 91 residues: Small ribosomal subunit protein uS19 (91 aa).

Belongs to the universal ribosomal protein uS19 family.

Functionally, protein S19 forms a complex with S13 that binds strongly to the 16S ribosomal RNA. The protein is Small ribosomal subunit protein uS19 of Aliarcobacter butzleri (strain RM4018) (Arcobacter butzleri).